Reading from the N-terminus, the 793-residue chain is Short transient receptor potential channel 1 (793 aa).

Residues 1 to 30 are disordered; it reads MMAALYPSTDLSGASSSSLPSSPSSSSPNE. Over 1-345 the chain is Cytoplasmic; that stretch reads MMAALYPSTD…FGQMSGYRRK (345 aa). The segment covering 15-28 has biased composition (low complexity); it reads SSSSLPSSPSSSSP. 4 ANK repeats span residues 46 to 75, 83 to 109, 111 to 156, and 158 to 180; these read LNEK…SGDL, LGRN…YGCQ, ADAL…EYST, and MDVA…MLLK. The Zn(2+) site is built by His189, Cys193, Cys195, and Cys198. The segment at residues 346 to 379 is an intramembrane region (discontinuously helical); the sequence is PTCKKIMTVLTVGIFWPVLSLCYLIAPKSQFGRI. The Cytoplasmic segment spans residues 380–386; the sequence is IHTPFMK. A helical membrane pass occupies residues 387-404; the sequence is FIIHGASYFTFLLLLNLY. Topologically, residues 405 to 422 are extracellular; the sequence is SLVYHEDKKNTMGPALER. Residues 423–439 form a helical membrane-spanning segment; it reads IDYLLILWIIGMIWSDI. Over 440-455 the chain is Cytoplasmic; sequence KRLWYEGLEDFLEESR. Residues 456–475 form a helical membrane-spanning segment; the sequence is NQLSFVMNSLYLATFALKEE. At 476–496 the chain is on the extracellular side; that stretch reads AHNKFHDFADRKDWDAFHPTL. The chain crosses the membrane as a helical span at residues 497-517; it reads VAEGLFAFANVLSYLRLFFYV. The Cytoplasmic segment spans residues 518 to 536; it reads YTSSILGPLQISMGRMLQD. The helical transmembrane segment at 537–558 threads the bilayer; sequence FGKFLGMFLLVLFSFTIGLTQL. Residues 559 to 623 lie on the Extracellular side of the membrane; it reads YDKGYTPKEQ…GEELQSFVGA (65 aa). Cys571 and Cys576 are oxidised to a cystine. A helical membrane pass occupies residues 624–644; the sequence is FIVGTYNVVVVIVLTKLLVAM. Residues 645-793 are Cytoplasmic-facing; it reads LHKSFQLIAN…SKYAMFYPRN (149 aa).

It belongs to the transient receptor (TC 1.A.4) family. STrpC subfamily. TRPC1 sub-subfamily. Heterotetramer with TRPC4 and/or TRPC5. Forms a heteromeric ion channel with TRPC4, with a 1:3 TRPC1:TRPC4 stoichiometry. Unlike other TRP channel proteins, does not form a homomeric channel. Interacts with TRPC4AP. Interacts with ITPR3. Interacts with MX1 and RNF24. Interacts with FKBP4. Interacts with PLSCR1. Interacts with PKD2L2. Forms a heterotetramer with PKD2 with a 2:2 stoichiometry; has distinct channel properties separate from PKD2 or TRPC1 homomers alone. In terms of processing, activation of PRKCA induces phosphorylation of TRPC1 and subsequent Ca2+ entry into cells.

The protein localises to the cell membrane. The enzyme catalyses Ca(2+)(in) = Ca(2+)(out). It carries out the reaction Na(+)(in) = Na(+)(out). The catalysed reaction is Li(+)(in) = Li(+)(out). It catalyses the reaction Cs(+)(in) = Cs(+)(out). With respect to regulation, may be operated by a phosphatidylinositol second messenger system activated by receptor tyrosine kinases or G-protein coupled receptors. Also activated by intracellular calcium store depletion. Functionally, forms a receptor-activated non-selective calcium permeant cation channel. Forms a heteromeric ion channel with TRPC4 or TRPC5 that has reduced calcium permeability compared to the homomeric TRPC4 or TRPC5 channel. Also permeable to monovalent ions including sodium, lithium and cesium ions. This is Short transient receptor potential channel 1 (TRPC1) from Bos taurus (Bovine).